A 118-amino-acid chain; its full sequence is Basic phospholipase A2 1 (118 aa).

7 cysteine pairs are disulfide-bonded: Cys-11–Cys-72, Cys-26–Cys-117, Cys-28–Cys-44, Cys-43–Cys-98, Cys-50–Cys-91, Cys-60–Cys-84, and Cys-78–Cys-89. Ca(2+) is bound by residues Tyr-27, Gly-29, and Gly-31. His-47 is a catalytic residue. A Ca(2+)-binding site is contributed by Asp-48. Asp-92 is an active-site residue.

It belongs to the phospholipase A2 family. Group I subfamily. D49 sub-subfamily. The cofactor is Ca(2+). As to expression, expressed by the venom gland.

It localises to the secreted. The enzyme catalyses a 1,2-diacyl-sn-glycero-3-phosphocholine + H2O = a 1-acyl-sn-glycero-3-phosphocholine + a fatty acid + H(+). Its function is as follows. PLA2 catalyzes the calcium-dependent hydrolysis of the 2-acyl groups in 3-sn-phosphoglycerides. The protein is Basic phospholipase A2 1 of Naja melanoleuca (Forest cobra).